The following is a 243-amino-acid chain: Proteasome subunit beta (243 aa).

Residues 1–40 (MRTPMNNDISGRPDSLNGDRSDVFSPELGEFPNADDRAND) are disordered. A propeptide spans 1–49 (MRTPMNNDISGRPDSLNGDRSDVFSPELGEFPNADDRANDIGDMETKTG) (removed in mature form; by autocatalysis). Thr-50 (nucleophile) is an active-site residue.

The protein belongs to the peptidase T1B family. The 20S proteasome core is composed of 14 alpha and 14 beta subunits that assemble into four stacked heptameric rings, resulting in a barrel-shaped structure. The two inner rings, each composed of seven catalytic beta subunits, are sandwiched by two outer rings, each composed of seven alpha subunits. The catalytic chamber with the active sites is on the inside of the barrel. Has a gated structure, the ends of the cylinder being occluded by the N-termini of the alpha-subunits. Is capped at one or both ends by the proteasome regulatory ATPase, PAN.

It is found in the cytoplasm. The enzyme catalyses Cleavage of peptide bonds with very broad specificity.. With respect to regulation, the formation of the proteasomal ATPase PAN-20S proteasome complex, via the docking of the C-termini of PAN into the intersubunit pockets in the alpha-rings, triggers opening of the gate for substrate entry. Interconversion between the open-gate and close-gate conformations leads to a dynamic regulation of the 20S proteasome proteolysis activity. In terms of biological role, component of the proteasome core, a large protease complex with broad specificity involved in protein degradation. This Haloquadratum walsbyi (strain DSM 16790 / HBSQ001) protein is Proteasome subunit beta.